The following is a 2525-amino-acid chain: Highly reducing polyketide synthase cm3B (2525 aa).

Positions 1–10 (MQSDTNNSPL) are enriched in polar residues. Residues 1–29 (MQSDTNNSPLSWEELRSGAASSDANSSPP) form a disordered region. A Ketosynthase family 3 (KS3) domain is found at 29 to 450 (PEPIAIIGMS…GTNAHVVVDA (422 aa)). Active-site for beta-ketoacyl synthase activity residues include Cys-202, His-336, and His-376. Residues 560 to 895 (VFSGQGSQYA…FLECLGALHV (336 aa)) form a malonyl-CoA:ACP transacylase (MAT) domain region. Residues 949–1087 (HELLGTFAHD…GLVHAETQAA (139 aa)) are N-terminal hotdog fold. The tract at residues 949–1252 (HELLGTFAHD…AKGVHTTTLP (304 aa)) is dehydratase (DH) domain. Positions 949 to 1257 (HELLGTFAHD…TTTLPGDTGL (309 aa)) constitute a PKS/mFAS DH domain. His-981 acts as the Proton acceptor; for dehydratase activity in catalysis. Residues 1107-1257 (VHEVTPQKLY…TTTLPGDTGL (151 aa)) form a C-terminal hotdog fold region. The Proton donor; for dehydratase activity role is filled by Asp-1169. Positions 1399-1504 (LEVGAGTASA…KKLLKPGGKF (106 aa)) are methyltransferase (CMet) domain. The interval 1799-2111 (GLLESIRWKD…AGKHTGKIVL (313 aa)) is enoyl reductase (ER) domain. Residues 2411–2489 (AQLLENISQL…ELAKIIAKES (79 aa)) form the Carrier domain. Residues 2411–2489 (AQLLENISQL…ELAKIIAKES (79 aa)) are ketoreductase (KR) domain. Ser-2449 is subject to O-(pantetheine 4'-phosphoryl)serine.

It participates in secondary metabolite biosynthesis. Its function is as follows. Highly reducing polyketide synthase; part of the gene cluster that mediates the biosynthesis of beauveriolides I and III, cyclodepsipeptides acting as inhibitors of the acyl-CoA:cholesterol acyltransferase. The HR-PKS cm3B initiates the biosynthesis of beauveriolides by iteratively catalyzing the formation of the linear polyketide chain. The ATP-dependent acetyl-CoA ligase cm3D converts the polyketide carboxylic acid to a CoA thioester which id shuttled to the first T domain in the NRPS cm3A by the acetyltransferase cm3C. Cm3A contains 13 domains and assembles the polyketide chain, L-phenylalanine, L-alanine, and D-leucine (or D-allo-isoleucine) to form beauveriolide I (or beauveriolide III). The production of both beauveriolides I and III suggests the substrate adaptability of cm3B, using different amino acids as substrates. This Cordyceps militaris (strain CM01) (Caterpillar fungus) protein is Highly reducing polyketide synthase cm3B.